The primary structure comprises 602 residues: (R)-limonene synthase (602 aa).

Mg(2+) contacts are provided by Asp356, Asp360, Asp500, Thr504, and Glu508. The short motif at 356–360 is the DDXXD motif element; it reads DDVYD.

It belongs to the terpene synthase family. Requires Mg(2+) as cofactor. Mn(2+) serves as cofactor.

The enzyme catalyses (2E)-geranyl diphosphate = (4R)-limonene + diphosphate. Its function is as follows. Catalyzes the formation of (R)-(+)-limonene, terpinolene, (1R,5S)-(+)-camphene, (1R,5R)-(+)-alpha-pinene, beta-myrcene and traces of alpha-phellandrene. This Lavandula angustifolia (Lavender) protein is (R)-limonene synthase.